The chain runs to 280 residues: Transcription factor MYB46 (280 aa).

2 HTH myb-type domains span residues 15 to 67 and 68 to 122; these read VKKM…INYL and RPDL…KKRL. 2 consecutive DNA-binding regions (H-T-H motif) follow at residues 43–67 and 95–118; these read WSDV…INYL and WSQI…NSTI. Residues 129 to 150 form a disordered region; sequence SNLINNSSSSPNTASDSSSNSA.

Expressed at low levels in stems and siliques, specifically in xylem.

The protein resides in the nucleus. In terms of biological role, transcription activator. Involved in the regulation of secondary wall biosynthesis in fibers and vessels. Transcription activator of the mannan synthase CSLA9 that recognizes and binds to the DNA consensus sequence 5'-[AG][GT]T[AT]GGT[GA]-3' cis-regulatory element of CSLA9 promoter. Transcription factor that acts as a molecular switch in the NAC012/SND1-mediated transcriptional network regulating secondary wall biosynthesis. Is directly activated by NAC012/SND1. Functions redundantly with MYB83 in the transcriptional regulatory cascade leading to secondary wall formation in fibers and vessels. Transcription activator that binds to the DNA consensus sequence 5'-ACC[AT]A[AC][TC]-3', designated as the secondary wall MYB-responsive element (SMRE). Regulates directly numerous transcription factors and a number of genes involved in secondary wall biosynthesis that contain SMRE elements in their promoters. Is an obligate component of the transcriptional regulatory complex toward the commitment of secondary wall cellulose synthesis. Is required for functional expression of the three secondary wall CESA genes, CESA4, CESA7 and CESA8. The polypeptide is Transcription factor MYB46 (Arabidopsis thaliana (Mouse-ear cress)).